Reading from the N-terminus, the 704-residue chain is Eukaryotic translation initiation factor 2-alpha kinase 1 (704 aa).

One can recognise a Protein kinase domain in the interval 224-667 (FEELELLGKG…LTSNLFHDLV (444 aa)). Residues 230–238 (LGKGGYGSV) and lysine 253 contribute to the ATP site. Aspartate 491 functions as the Proton acceptor in the catalytic mechanism.

It belongs to the protein kinase superfamily. Ser/Thr protein kinase family. GCN2 subfamily. Post-translationally, autophosphorylated.

The enzyme catalyses L-seryl-[protein] + ATP = O-phospho-L-seryl-[protein] + ADP + H(+). The catalysed reaction is L-threonyl-[protein] + ATP = O-phospho-L-threonyl-[protein] + ADP + H(+). Mediates down-regulation of protein synthesis in response to stress conditions by the phosphorylation of the alpha subunit of eIF-2 (tif211) on 'Ser-52'. Protein synthesis is inhibited at the level of initiation. Activity is inhibited in the presence of heme. The protein is Eukaryotic translation initiation factor 2-alpha kinase 1 (hri1) of Schizosaccharomyces pombe (strain 972 / ATCC 24843) (Fission yeast).